Here is a 522-residue protein sequence, read N- to C-terminus: Maturase K (522 aa).

It belongs to the intron maturase 2 family. MatK subfamily.

The protein resides in the plastid. It localises to the chloroplast. In terms of biological role, usually encoded in the trnK tRNA gene intron. Probably assists in splicing its own and other chloroplast group II introns. The protein is Maturase K of Gladiolus papilio (Goldblotch gladiolus).